A 398-amino-acid chain; its full sequence is Lysophospholipid transporter LplT (398 aa).

11 helical membrane passes run 17-37, 52-72, 90-110, 137-157, 163-183, 226-246, 256-276, 285-305, 309-329, 352-372, and 373-393; these read AVLV…FAIL, ILQI…GQIA, LGAF…LVGV, GLME…GGFL, AIAL…NFFI, LFWG…PVVL, ILNV…ARFI, MPAG…HSIW, VLLI…NALL, IAML…VPVV, and TTGI…WIWN.

Belongs to the major facilitator superfamily. LplT (TC 2.A.1.42) family.

It localises to the cell inner membrane. In terms of biological role, catalyzes the facilitated diffusion of 2-acyl-glycero-3-phosphoethanolamine (2-acyl-GPE) into the cell. The sequence is that of Lysophospholipid transporter LplT from Photorhabdus laumondii subsp. laumondii (strain DSM 15139 / CIP 105565 / TT01) (Photorhabdus luminescens subsp. laumondii).